The primary structure comprises 397 residues: S-adenosylmethionine synthase (397 aa).

His-17 serves as a coordination point for ATP. A Mg(2+)-binding site is contributed by Asp-19. Glu-45 provides a ligand contact to K(+). L-methionine-binding residues include Glu-58 and Gln-101. The flexible loop stretch occupies residues 101 to 111; that stretch reads QSPDIAQGVDK. Residues 176–178, 243–244, Asp-252, 258–259, and Lys-279 each bind ATP; these read DGK, RF, and RK. Asp-252 provides a ligand contact to L-methionine. L-methionine is bound at residue Lys-283.

Belongs to the AdoMet synthase family. As to quaternary structure, homotetramer; dimer of dimers. The cofactor is Mg(2+). K(+) is required as a cofactor.

The protein resides in the cytoplasm. It catalyses the reaction L-methionine + ATP + H2O = S-adenosyl-L-methionine + phosphate + diphosphate. The protein operates within amino-acid biosynthesis; S-adenosyl-L-methionine biosynthesis; S-adenosyl-L-methionine from L-methionine: step 1/1. In terms of biological role, catalyzes the formation of S-adenosylmethionine (AdoMet) from methionine and ATP. The overall synthetic reaction is composed of two sequential steps, AdoMet formation and the subsequent tripolyphosphate hydrolysis which occurs prior to release of AdoMet from the enzyme. The sequence is that of S-adenosylmethionine synthase from Staphylococcus aureus (strain USA300).